The chain runs to 475 residues: 3-isopropylmalate dehydratase large subunit (475 aa).

[4Fe-4S] cluster contacts are provided by Cys-348, Cys-408, and Cys-411.

It belongs to the aconitase/IPM isomerase family. LeuC type 1 subfamily. In terms of assembly, heterodimer of LeuC and LeuD. Requires [4Fe-4S] cluster as cofactor.

It carries out the reaction (2R,3S)-3-isopropylmalate = (2S)-2-isopropylmalate. It functions in the pathway amino-acid biosynthesis; L-leucine biosynthesis; L-leucine from 3-methyl-2-oxobutanoate: step 2/4. Catalyzes the isomerization between 2-isopropylmalate and 3-isopropylmalate, via the formation of 2-isopropylmaleate. In Acidobacterium capsulatum (strain ATCC 51196 / DSM 11244 / BCRC 80197 / JCM 7670 / NBRC 15755 / NCIMB 13165 / 161), this protein is 3-isopropylmalate dehydratase large subunit.